The following is a 1190-amino-acid chain: MPAMVPGWNHGNITRSKAEELLSRAGKDGSFLVRASESIPRAYALCVLFRNCVYTYRILPNEDDKFTVQASEGVPMRFFTKLDQLIEFYKKENMGLVTHLQFPVPLEEEDAIDEPEEDTESVMSPPELPPRNIPVSGGPCEAKDLPLPTENPRAPEVTRLSLSETLFQRLQSMDTSGLPEEHLKAIQDYLSTQLMLDSDFLKTGSSNLPHLKKLTSLLCKELHGEVIRTLPSLESLQRLFDQQLSPGLRPRPQVPGEANPITMVAKLSQLTSLLSSIEDKVKALLHEGSESTNRRSLIPPVTFEVKSESLGIPQKMHLKVDVESGKLIIKKSRDGSEDKFYSHKKILQLIKSQKFLNKLVILVETEKEKILRKEYVFSDSKKREGFCQLLQQMKNKHSEQSEPDMITIFIGTWNMGNAPPPKKITSWFLSKGQGKTRDDSADYIPHDIYVIGTQEDPLGEKEWLEILRHSLQEVTSMTFKTVAIHTLWNIRIVVLAKPEHENRISHICTDNVKTGIANTLGNKGAVGVSFMFNGTSLGFVNSHLTSGSEKKLRRNQNYMNILRFLALGDKKLSPFNITHRFTHLFWLGDLNYRVELPTWEAEAIIQKIKQQQYSDLLAHDQLLLERKEQEVFLHFEEEEITFAPTYRFERLTRDKYAYTKQKATGMKYNLPSWCDRVLWKSYPLVHVVCQSYGSTSDIMTSDHSPVFATFEAGVTSQFVSKNGPGAVDSQGQIEFLACYATLKTKSQTKFYLELHSSCLESFVKSQEGENEEGDEGELVVRFGETLPKLKPIISDPEYLLDQHILISIKSSDSDESYGEGCIALRLETTESQLPIYTPLTHHGEMTGHFRGEIKLQTSEGKMREKLYDFVKTERDESSGMKCLKNLTSHDPMRQWEPAGRVPACGISSLNEIINPNYIGMGPFGQPLHGKSTLSPDQQLTAWSYDQLPKDSSLGPGRGEGPPTPPSQPPLSPKKFSSSTANRGSCPRVQETRPGDLGKVEALPQEDLPLTKPEMFENPLYGSVSPFPKLVPRKEQESPKMMRKEPPPCPDPGVSSPSIMLPKAQEVENVKGTSKQAPVPVFGPTPRIRSFTCSSSAEGRMPSGDKSQGKPKAPASSQAPVPVKRPVKPSRSEMSQQTTPIPAPRPPLPVKSPAVLQLQHSKGRDYRDNTELPHHGKHRQEESLLGRTAMQ.

Positions 8 to 104 (WNHGNITRSK…GLVTHLQFPV (97 aa)) constitute an SH2 domain. Residues 111–120 (AIDEPEEDTE) show a composition bias toward acidic residues. Residues 111-130 (AIDEPEEDTESVMSPPELPP) are disordered. The SH3-binding 1 signature appears at 126 to 131 (PELPPR). Ser245 carries the phosphoserine modification. The short motif at 914-917 (NPNY) is the NPXY motif 1 element. Tyr917 carries the post-translational modification Phosphotyrosine. Ser934 carries the post-translational modification Phosphoserine. A Phosphotyrosine modification is found at Tyr944. Residues 946-1190 (QLPKDSSLGP…ESLLGRTAMQ (245 aa)) form a disordered region. Residues 961–971 (PPTPPSQPPLS) show a composition bias toward pro residues. Thr963 is subject to Phosphothreonine. Residues Ser966 and Ser971 each carry the phosphoserine modification. Positions 969–974 (PLSPKK) match the SH3-binding 2 motif. Basic and acidic residues predominate over residues 989-998 (QETRPGDLGK). Positions 1014–1028 (MFENPLYGSVSPFPK) are interaction with DAB2. An NPXY motif 2 motif is present at residues 1017-1020 (NPLY). The residue at position 1020 (Tyr1020) is a Phosphotyrosine. The span at 1031-1045 (PRKEQESPKMMRKEP) shows a compositional bias: basic and acidic residues. The SH3-binding 3 signature appears at 1038–1049 (PKMMRKEPPPCP). Residues 1140 to 1149 (IPAPRPPLPV) are compositionally biased toward pro residues. Residues 1161 to 1183 (KGRDYRDNTELPHHGKHRQEESL) show a composition bias toward basic and acidic residues.

Belongs to the inositol 1,4,5-trisphosphate 5-phosphatase family. As to quaternary structure, interacts with tyrosine phosphorylated forms of SHC1. Interacts with tyrosine phosphorylated form of DOK1. Interacts with tyrosine phosphorylated form of DOK3. Interacts with tyrosine phosphorylated form of SLAMF1/CD150. Interacts with PTPN11/SHP-2 in response to IL-3. Interacts with receptor EPOR. Interacts with receptors MS4A2/FCER1B and FCER1G. Interacts with receptors FCGR2B and FCGR3. Interacts with receptor FCGR2A, leading to regulate gene expression during the phagocytic process. Interacts with GRB2. Interacts with PLCG1. Interacts with tyrosine kinases SRC and TEC. Interacts with c-Met/MET. Interacts with MILR1 (tyrosine-phosphorylated). Can weakly interact (via NPXY motif 2) with DAB2 (via PID domain); the interaction is impaired by tyrosine phosphorylation of the NPXY motif. Interacts (via SH2 domain) with tyrosine phosphorylated KLRC1 (via ITIM). Interacts with MPL/TPOR. In terms of processing, tyrosine phosphorylated by the members of the SRC family after exposure to a diverse array of extracellular stimuli such as cytokines, growth factors, antibodies, chemokines, integrin ligands and hypertonic and oxidative stress. Phosphorylated upon IgG receptor FCGR2B-binding.

It localises to the cytoplasm. The protein localises to the cell membrane. The protein resides in the membrane raft. It is found in the cytoskeleton. The catalysed reaction is a 1,2-diacyl-sn-glycero-3-phospho-(1D-myo-inositol-3,4,5-trisphosphate) + H2O = a 1,2-diacyl-sn-glycero-3-phospho-(1D-myo-inositol-3,4-bisphosphate) + phosphate. The enzyme catalyses 1D-myo-inositol 1,3,4,5-tetrakisphosphate + H2O = 1D-myo-inositol 1,3,4-trisphosphate + phosphate. It catalyses the reaction a 1,2-diacyl-sn-glycero-3-phospho-(1D-myo-inositol-4,5-bisphosphate) + H2O = a 1,2-diacyl-sn-glycero-3-phospho-(1D-myo-inositol 4-phosphate) + phosphate. Activated upon translocation to the sites of synthesis of PtdIns(3,4,5)P3 in the membrane. Its function is as follows. Phosphatidylinositol (PtdIns) phosphatase that specifically hydrolyzes the 5-phosphate of phosphatidylinositol-3,4,5-trisphosphate (PtdIns(3,4,5)P3) to produce PtdIns(3,4)P2, thereby negatively regulating the PI3K (phosphoinositide 3-kinase) pathways. Also able to hydrolyze the 5-phosphate of phosphatidylinositol-4,5-bisphosphate (PtdIns(4,5)P3) and inositol 1,3,4,5-tetrakisphosphate. Acts as a negative regulator of B-cell antigen receptor signaling. Mediates signaling from the FC-gamma-RIIB receptor (FCGR2B), playing a central role in terminating signal transduction from activating immune/hematopoietic cell receptor systems. Acts as a negative regulator of myeloid cell proliferation/survival and chemotaxis, mast cell degranulation, immune cells homeostasis, integrin alpha-IIb/beta-3 signaling in platelets and JNK signaling in B-cells. Regulates proliferation of osteoclast precursors, macrophage programming, phagocytosis and activation and is required for endotoxin tolerance. Involved in the control of cell-cell junctions, CD32a signaling in neutrophils and modulation of EGF-induced phospholipase C activity. Key regulator of neutrophil migration, by governing the formation of the leading edge and polarization required for chemotaxis. Modulates FCGR3/CD16-mediated cytotoxicity in NK cells. Mediates the activin/TGF-beta-induced apoptosis through its Smad-dependent expression. This is Phosphatidylinositol 3,4,5-trisphosphate 5-phosphatase 1 (Inpp5d) from Rattus norvegicus (Rat).